A 221-amino-acid polypeptide reads, in one-letter code: Succinate--CoA ligase [ADP-forming] subunit beta, mitochondrial (221 aa).

The ATP-grasp domain maps to Asp-1–Ile-122. Residue Lys-5 coordinates ATP. Residues Lys-22 and Lys-26 each carry the N6-acetyllysine modification. A Phosphoserine modification is found at Ser-114. At Thr-139 the chain carries Phosphothreonine. Substrate is bound at residue Gly-171–Met-173. The residue at position 196 (Lys-196) is an N6-acetyllysine.

Belongs to the succinate/malate CoA ligase beta subunit family. ATP-specific subunit beta subfamily. Heterodimer of an alpha and a beta subunit. The beta subunit determines specificity for ATP. Interacts with ALAS2.

It is found in the mitochondrion. The enzyme catalyses succinate + ATP + CoA = succinyl-CoA + ADP + phosphate. It participates in carbohydrate metabolism; tricarboxylic acid cycle; succinate from succinyl-CoA (ligase route): step 1/1. In terms of biological role, ATP-specific succinyl-CoA synthetase functions in the citric acid cycle (TCA), coupling the hydrolysis of succinyl-CoA to the synthesis of ATP and thus represents the only step of substrate-level phosphorylation in the TCA. The beta subunit provides nucleotide specificity of the enzyme and binds the substrate succinate, while the binding sites for coenzyme A and phosphate are found in the alpha subunit. The sequence is that of Succinate--CoA ligase [ADP-forming] subunit beta, mitochondrial from Mesocricetus auratus (Golden hamster).